A 351-amino-acid polypeptide reads, in one-letter code: Holliday junction branch migration complex subunit RuvB (351 aa).

Over residues 1-12 (MGRFEDDAEVED) the composition is skewed to acidic residues. Residues 1–23 (MGRFEDDAEVEDREVSPALTVGE) are disordered. Residues 1 to 191 (MGRFEDDAEV…FGFTAHMDFY (191 aa)) form a large ATPase domain (RuvB-L) region. Residues leucine 30, arginine 31, glycine 72, lysine 75, threonine 76, serine 77, 138–140 (EDF), arginine 181, tyrosine 191, and arginine 228 contribute to the ATP site. Threonine 76 provides a ligand contact to Mg(2+). The tract at residues 192–262 (EPVELERVLA…IAKSALEVYD (71 aa)) is small ATPAse domain (RuvB-S). The segment at 265–351 (ELGLDRLDRA…TGIGQAGLFD (87 aa)) is head domain (RuvB-H). Residues arginine 320 and arginine 325 each contribute to the DNA site.

It belongs to the RuvB family. As to quaternary structure, homohexamer. Forms an RuvA(8)-RuvB(12)-Holliday junction (HJ) complex. HJ DNA is sandwiched between 2 RuvA tetramers; dsDNA enters through RuvA and exits via RuvB. An RuvB hexamer assembles on each DNA strand where it exits the tetramer. Each RuvB hexamer is contacted by two RuvA subunits (via domain III) on 2 adjacent RuvB subunits; this complex drives branch migration. In the full resolvosome a probable DNA-RuvA(4)-RuvB(12)-RuvC(2) complex forms which resolves the HJ.

It is found in the cytoplasm. The enzyme catalyses ATP + H2O = ADP + phosphate + H(+). The RuvA-RuvB-RuvC complex processes Holliday junction (HJ) DNA during genetic recombination and DNA repair, while the RuvA-RuvB complex plays an important role in the rescue of blocked DNA replication forks via replication fork reversal (RFR). RuvA specifically binds to HJ cruciform DNA, conferring on it an open structure. The RuvB hexamer acts as an ATP-dependent pump, pulling dsDNA into and through the RuvAB complex. RuvB forms 2 homohexamers on either side of HJ DNA bound by 1 or 2 RuvA tetramers; 4 subunits per hexamer contact DNA at a time. Coordinated motions by a converter formed by DNA-disengaged RuvB subunits stimulates ATP hydrolysis and nucleotide exchange. Immobilization of the converter enables RuvB to convert the ATP-contained energy into a lever motion, pulling 2 nucleotides of DNA out of the RuvA tetramer per ATP hydrolyzed, thus driving DNA branch migration. The RuvB motors rotate together with the DNA substrate, which together with the progressing nucleotide cycle form the mechanistic basis for DNA recombination by continuous HJ branch migration. Branch migration allows RuvC to scan DNA until it finds its consensus sequence, where it cleaves and resolves cruciform DNA. The chain is Holliday junction branch migration complex subunit RuvB from Mycolicibacterium smegmatis (strain ATCC 700084 / mc(2)155) (Mycobacterium smegmatis).